Here is a 375-residue protein sequence, read N- to C-terminus: Alanine racemase (375 aa).

The active-site Proton acceptor; specific for D-alanine is lysine 41. Lysine 41 carries the N6-(pyridoxal phosphate)lysine modification. Arginine 141 serves as a coordination point for substrate. Residue tyrosine 270 is the Proton acceptor; specific for L-alanine of the active site. A substrate-binding site is contributed by methionine 317.

This sequence belongs to the alanine racemase family. Pyridoxal 5'-phosphate serves as cofactor.

The enzyme catalyses L-alanine = D-alanine. It functions in the pathway amino-acid biosynthesis; D-alanine biosynthesis; D-alanine from L-alanine: step 1/1. In terms of biological role, catalyzes the interconversion of L-alanine and D-alanine. May also act on other amino acids. The chain is Alanine racemase (alr) from Lactiplantibacillus plantarum (strain ATCC BAA-793 / NCIMB 8826 / WCFS1) (Lactobacillus plantarum).